Here is a 512-residue protein sequence, read N- to C-terminus: GMP synthase [glutamine-hydrolyzing] (512 aa).

The Glutamine amidotransferase type-1 domain occupies Lys6–Lys195. Catalysis depends on Cys83, which acts as the Nucleophile. Residues His169 and Glu171 contribute to the active site. The GMPS ATP-PPase domain occupies Trp196–Lys387. Ser223 to Ser229 serves as a coordination point for ATP.

In terms of assembly, homodimer.

It catalyses the reaction XMP + L-glutamine + ATP + H2O = GMP + L-glutamate + AMP + diphosphate + 2 H(+). It functions in the pathway purine metabolism; GMP biosynthesis; GMP from XMP (L-Gln route): step 1/1. Its function is as follows. Catalyzes the synthesis of GMP from XMP. The protein is GMP synthase [glutamine-hydrolyzing] of Spiroplasma kunkelii.